The following is a 285-amino-acid chain: MDLWFSESHTPDVKLSVRTEEQLFVGKSEWQDISVINTPSFGKMLILNGHVLFSDADNFVYNEMVVHVPMAVHPNPEKVLIIGGGDGGVAQVLELYPDIKQIDIVEPDEMLVDVCRQYFPEFASGLDDDRVTIYHQDGLRFLRNCDSDYDIIINDATDPFGHTEGLFTKEFYGNSYRALKEDGIMIYQHGSPFFDEDESAFRSMHRKASQSFPISRVFQAHIPTVPSGYWCFGFASKKYHPIEDFKKEDWKARQLKTDYYSANLHLGAFSLPRYVEDILEEEEEK.

Residues 2–237 (DLWFSESHTP…GYWCFGFASK (236 aa)) enclose the PABS domain. Residue Gln31 participates in S-methyl-5'-thioadenosine binding. Asp86 lines the spermidine pocket. Residues Glu106 and 137 to 138 (DG) each bind S-methyl-5'-thioadenosine. The active-site Proton acceptor is Asp155.

It belongs to the spermidine/spermine synthase family. Homodimer or homotetramer.

The protein localises to the cytoplasm. The enzyme catalyses S-adenosyl 3-(methylsulfanyl)propylamine + putrescine = S-methyl-5'-thioadenosine + spermidine + H(+). It functions in the pathway amine and polyamine biosynthesis; spermidine biosynthesis; spermidine from putrescine: step 1/1. Functionally, catalyzes the irreversible transfer of a propylamine group from the amino donor S-adenosylmethioninamine (decarboxy-AdoMet) to putrescine (1,4-diaminobutane) to yield spermidine. In Streptococcus uberis (strain ATCC BAA-854 / 0140J), this protein is Polyamine aminopropyltransferase.